The chain runs to 256 residues: Histone H1 (256 aa).

Low complexity-rich tracts occupy residues Met1–Thr19 and Lys27–Thr43. Disordered stretches follow at residues Met1 to Val53 and Gly108 to Lys256. Position 11 is a phosphoserine (Ser11). Residues Ser45–Ala119 form the H15 domain. Composition is skewed to basic and acidic residues over residues Ala121–Val140 and Lys176–Lys193. Residues Thr194 to Ala229 show a composition bias toward low complexity. Basic residues predominate over residues Lys245–Lys256.

It belongs to the histone H1/H5 family. In terms of processing, phosphorylated in oocytes during prophase I of meiosis.

The protein localises to the nucleus. It is found in the chromosome. Functionally, histones H1 are necessary for the condensation of nucleosome chains into higher-order structures. This Drosophila melanogaster (Fruit fly) protein is Histone H1 (His1).